The sequence spans 93 residues: DNA-directed RNA polymerase subunit Rpo11 (93 aa).

It belongs to the archaeal Rpo11/eukaryotic RPB11/RPC19 RNA polymerase subunit family. Part of the RNA polymerase complex.

The protein localises to the cytoplasm. It carries out the reaction RNA(n) + a ribonucleoside 5'-triphosphate = RNA(n+1) + diphosphate. DNA-dependent RNA polymerase (RNAP) catalyzes the transcription of DNA into RNA using the four ribonucleoside triphosphates as substrates. This is DNA-directed RNA polymerase subunit Rpo11 from Methanocella arvoryzae (strain DSM 22066 / NBRC 105507 / MRE50).